The primary structure comprises 255 residues: 5'-nucleotidase SurE (255 aa).

Residues D8, D9, S40, and N93 each coordinate a divalent metal cation.

Belongs to the SurE nucleotidase family. Requires a divalent metal cation as cofactor.

The protein resides in the cytoplasm. The catalysed reaction is a ribonucleoside 5'-phosphate + H2O = a ribonucleoside + phosphate. Its function is as follows. Nucleotidase that shows phosphatase activity on nucleoside 5'-monophosphates. The protein is 5'-nucleotidase SurE of Azorhizobium caulinodans (strain ATCC 43989 / DSM 5975 / JCM 20966 / LMG 6465 / NBRC 14845 / NCIMB 13405 / ORS 571).